Here is a 319-residue protein sequence, read N- to C-terminus: Methionyl-tRNA formyltransferase (319 aa).

115–118 (SLLP) serves as a coordination point for (6S)-5,6,7,8-tetrahydrofolate.

Belongs to the Fmt family.

The enzyme catalyses L-methionyl-tRNA(fMet) + (6R)-10-formyltetrahydrofolate = N-formyl-L-methionyl-tRNA(fMet) + (6S)-5,6,7,8-tetrahydrofolate + H(+). Functionally, attaches a formyl group to the free amino group of methionyl-tRNA(fMet). The formyl group appears to play a dual role in the initiator identity of N-formylmethionyl-tRNA by promoting its recognition by IF2 and preventing the misappropriation of this tRNA by the elongation apparatus. The sequence is that of Methionyl-tRNA formyltransferase from Lactococcus lactis subsp. lactis (strain IL1403) (Streptococcus lactis).